The sequence spans 238 residues: Ribitol-5-phosphate cytidylyltransferase (238 aa).

CTP contacts are provided by residues 7–10 (LAGG) and 81–87 (GDDRNHT).

It belongs to the IspD/TarI cytidylyltransferase family. TarI subfamily.

The catalysed reaction is D-ribitol 5-phosphate + CTP + H(+) = CDP-L-ribitol + diphosphate. The protein operates within cell wall biogenesis; poly(ribitol phosphate) teichoic acid biosynthesis. Its function is as follows. Catalyzes the transfer of the cytidylyl group of CTP to D-ribitol 5-phosphate. This Staphylococcus epidermidis (strain ATCC 35984 / DSM 28319 / BCRC 17069 / CCUG 31568 / BM 3577 / RP62A) protein is Ribitol-5-phosphate cytidylyltransferase.